The chain runs to 1659 residues: Cortactin-binding protein 2 (1659 aa).

Residues 1–23 are disordered; it reads MATDGASCEPDLSRAPEDAAGAA. Residues 119 to 276 are a coiled coil; the sequence is RKMQERMSAQ…EQLKRGSDSK (158 aa). Disordered regions lie at residues 324–436 and 450–474; these read LTMP…LHPG and GNAN…SPTS. Low complexity-rich tracts occupy residues 337–348 and 381–392; these read ASANAKGSAAMA and GPSTGLTPDPTS. The segment covering 405 to 418 has biased composition (polar residues); it reads TAQTPGITPQNSQA. Arginine 494 carries the post-translational modification Asymmetric dimethylarginine. Positions 495–612 are disordered; sequence FTGPQAGAPP…SSPQLPPKPS (118 aa). Residues 579–589 are compositionally biased toward polar residues; the sequence is TVASPPSSLPQ. ANK repeat units lie at residues 705–735, 739–768, 772–801, 805–834, and 838–867; these read GRPT…DINY, DGHS…QVNA, NGFT…NINH, GGQT…DRNV, and DGWT…PAHG. The interval 869-893 is disordered; sequence SFSEEESESGVFDLDGGGESPEGKS. Residues 908–938 form an ANK 6 repeat; the sequence is EGWTAAHIAASKGFKNCLEILCRHGGLETER. The tract at residues 1443 to 1478 is disordered; that stretch reads KKKGESGAWRKVNTSPRRKSGRFSLPTWNKPDLSTE. Position 1520 is a phosphoserine (serine 1520). Residues 1613–1659 form a disordered region; the sequence is RSKVTQCSQNTKRNSSSSNTRQIEINNNSKEENWNLHKNEHLEKPNK. Over residues 1620-1634 the composition is skewed to low complexity; sequence SQNTKRNSSSSNTRQ. Basic and acidic residues predominate over residues 1641–1659; that stretch reads SKEENWNLHKNEHLEKPNK.

Interacts with CTTN/cortactin SH3 domain. Interacts with STRN, STRN4/zinedin and MOB4/phocein; this interactions mediate the association with the STRIPAK core complex and may regulate dendritic spine distribution of the STRIPAK complex in hippocampal neurons. Activation of glutamate receptors weakens the interaction with STRN and STRN4.

Its subcellular location is the cytoplasm. It localises to the cell cortex. The protein resides in the cell projection. It is found in the dendritic spine. In terms of biological role, regulates the dendritic spine distribution of CTTN/cortactin in hippocampal neurons, and thus controls dendritic spinogenesis and dendritic spine maintenance. Associates with the striatin-interacting phosphatase and kinase (STRIPAK) core complex to regulate dendritic spine distribution of the STRIPAK complex in hippocampal neurons. The chain is Cortactin-binding protein 2 (CTTNBP2) from Saimiri boliviensis boliviensis (Bolivian squirrel monkey).